Reading from the N-terminus, the 145-residue chain is 3-dehydroquinate dehydratase (145 aa).

Tyr22 (proton acceptor) is an active-site residue. Substrate contacts are provided by Asn74, His80, and Asp87. The active-site Proton donor is His100. Residues 101-102 (IS) and Arg111 contribute to the substrate site.

This sequence belongs to the type-II 3-dehydroquinase family. In terms of assembly, homododecamer.

The enzyme catalyses 3-dehydroquinate = 3-dehydroshikimate + H2O. It participates in metabolic intermediate biosynthesis; chorismate biosynthesis; chorismate from D-erythrose 4-phosphate and phosphoenolpyruvate: step 3/7. Its function is as follows. Catalyzes a trans-dehydration via an enolate intermediate. The chain is 3-dehydroquinate dehydratase from Lachnoclostridium phytofermentans (strain ATCC 700394 / DSM 18823 / ISDg) (Clostridium phytofermentans).